We begin with the raw amino-acid sequence, 794 residues long: MMEVIDSVLGDRQSAIQLIDESKKFHQDALNYFNKCIDDRDVGLDYHVISVFGSQSSGKSTLLNHLFNTDFDTMDAQVKRQQTTKGIWLAHTRKVNTTHKLDGPASDLFVLDVEGSDGAERGEDQDFERKAALFAISVSEVLIVNMWEQQIGLYQGNNMALLKTVFEVNLSLFGKSHNGHKVLLLFVIRDHVGITPLSSLKESLIAELEKVWSELNKPVECEDSSLYDFFDLEFVGLGHKLLQAEQFQEGVKRLGDSFALKSANPYYFKPQYHHNLPLDGWIMYSENCWEQVENNRDLDLPTQQILVARFKTDEVAQEALSLFHSKYSGSVDHILDDREKLGEVLKNLKQECLIYYDERAYRYAEPVYLEKRSELAAKMEAEFRKTIGNFLDQLSESLMQRLQTEVLDKKNQHLPFQKRTKILVQSTKEEYWTAVSSFQQLELLRSTEEILQHFDEQVDTKIKQLKNDEVNTLIARANKSITLKVKEQAVHYLSNPERDTWDKILDMFEKTIQSSLSKYEISEGHYDFQVGFTEEENDSVYKKVCSRAWHVLNVTVHDYLKPDTIVSILRDRFETKFRYDEDDSPRLWRNEDEIDRAFRIAKDHALEVLNVLSFAATSDHVEIVPAFGEDNHEEDECYEDELGIQHSRHFAHILNELQKEKVLQQFRRQINLTVLDSKRSIIKTTTAIPIWMYLLVVALGWNEFVMVLRNPLLVTLVLLFGVGFIFVNKFGLWGPVLNVAHNAVAEVRITAKEKLRAIVMDEDEKRHLINSAGKESYEMKDMSDSDNEKIEKSE.

The Cytoplasmic segment spans residues 1-687 (MMEVIDSVLG…KRSIIKTTTA (687 aa)). The region spanning 43 to 272 (GLDYHVISVF…ANPYYFKPQY (230 aa)) is the GB1/RHD3-type G domain. 53–60 (GSQSSGKS) provides a ligand contact to GTP. The stretch at 331–352 (VDHILDDREKLGEVLKNLKQEC) forms a coiled coil. Residues 688-708 (IPIWMYLLVVALGWNEFVMVL) form a helical membrane-spanning segment. Topologically, residues 709 to 711 (RNP) are lumenal. The chain crosses the membrane as a helical span at residues 712–732 (LLVTLVLLFGVGFIFVNKFGL). Topologically, residues 733–794 (WGPVLNVAHN…SDNEKIEKSE (62 aa)) are cytoplasmic. The segment at 770–794 (NSAGKESYEMKDMSDSDNEKIEKSE) is disordered. The span at 775 to 794 (ESYEMKDMSDSDNEKIEKSE) shows a compositional bias: basic and acidic residues.

This sequence belongs to the TRAFAC class dynamin-like GTPase superfamily. GB1/RHD3 GTPase family. RHD3 subfamily.

It is found in the endoplasmic reticulum membrane. In terms of biological role, cooperates with the reticulon proteins and tubule-shaping DP1 family proteins to generate and maintain the structure of the tubular endoplasmic reticulum network. Has GTPase activity, which is required for its function in ER organization. This chain is Protein SEY1, found in Zygosaccharomyces rouxii (strain ATCC 2623 / CBS 732 / NBRC 1130 / NCYC 568 / NRRL Y-229).